The sequence spans 1001 residues: MIKSLNERDNFLNRLREMEHKREKDEKQEKAARKVQKFWRGHRVQHNQRLLFRAEFDAVSDRQRGLEETIKMAQLLVNFYETNKDEERLVMTLSELVKLKTSDKEFEKRIRETQRLLLARCCIKFLKNATENTIFFHIFRYLEDYVTCHSKLFEASSKLGLFNAEFHLLEALIGKPTGKTVERASLNPRILQLLTRIFETFVNPSRSTSVSVNVANRLLKTICVNITDLNFSNYILYYIKDHIKPTSPNFTNLFEAMKSVDILNNWKVRPEIAETASLRLQSIFVSQIVHVSNTQSEDVKQYFNSLAVFLEHHSKIMRSLNVKEDLSEFGRLRTSVNNHLKQYCEEMLISNEFRRAACIYANLPGVQVETIISLRKYFSQFLDLLAASNTFVEALYAFIARLCPNGEFDPIDAKSPKVNALELFCNCLNKRVSSVADSDFVPTDIFVDFDHTVEFLRDVSIKLIHLMFPTMARGDLYSGNLKEKMYKAETDWKDVTESVFSILGAIYQKDIRLKYFPEEFWTNHGREVLSGIGEHRRMPRRRMPNGRLQIERTMDTEFVERLAAIYEMDSDSENDDEDEDNNLPAVLRRAICVMKHIPFIVPFMDRVKLFTRLLNQDKEKHYTSTFGMGFNGPSVTVRRDQVYMDAFETFAPKMQGDKVNDLKSMVRVKMVNWAGMNESGIDGGGIFREFLSELLKTAFNVERGFFTFTESKLLYPNPTAPFLLGVDCLAHFQFIGRMIGKLIYERQLQEVRFAEFFIAQIFETDKNKDVDLQHMKSFDPIIFKHLKALQKMNNRELDELQLDFSVVTSDMGLVRNVNLKPNGSKFRVTVENVHEYVRLYVNYHLKQRIASMVDAVRKGISEIISIEWMRMFAPHELQIMIAGYEEVFTAKELRKFCELRFAAGTQDINYEEMFWDVIDKLSNDDKKALLKFVTGCSRAPVDGFKSIQPRMGVLVIPSSDDELPTSATCMNMLRIPKYSNRTKLEEKLRYAINSGAGFELA.

The IQ domain occupies 28-57 (QEKAARKVQKFWRGHRVQHNQRLLFRAEFD). Positions 66-115 (LEETIKMAQLLVNFYETNKDEERLVMTLSELVKLKTSDKEFEKRIRETQR) form a coiled coil. The 344-residue stretch at 658–1001 (KVNDLKSMVR…INSGAGFELA (344 aa)) folds into the HECT domain. Residue cysteine 969 is the Glycyl thioester intermediate of the active site.

Interacts with ify-1 and cyb-1.

The enzyme catalyses S-ubiquitinyl-[E2 ubiquitin-conjugating enzyme]-L-cysteine + [acceptor protein]-L-lysine = [E2 ubiquitin-conjugating enzyme]-L-cysteine + N(6)-ubiquitinyl-[acceptor protein]-L-lysine.. The protein operates within protein modification; protein ubiquitination. In terms of biological role, E3 ubiquitin-protein ligase that accepts ubiquitin from E2 ubiquitin-conjugating enzymes, such as ubc-18, in the form of a thioester and then directly transfers the ubiquitin to targeted substrates. Ubiquitinates ify-1 and cyb-1 targeting them for degradation in post-meiotic embryos. The protein is E3 ubiquitin-protein ligase etc-1 of Caenorhabditis elegans.